The sequence spans 362 residues: Forkhead box protein F (362 aa).

The disordered stretch occupies residues 19–70; sequence LDSTAPNNSHRTIKAENYFNEDEEDYNENSHEDSEDSKEDSDGQGCRSRKRK. Residues 37–57 are compositionally biased toward acidic residues; it reads FNEDEEDYNENSHEDSEDSKE. A DNA-binding region (fork-head) is located at residues 72 to 169; the sequence is KPPFSYIALI…EENGFRRRPR (98 aa).

Its subcellular location is the nucleus. In terms of biological role, transcription factor that is required for cell fate of coelomocytes which are non-muscle mesodermal cells. Acts in concert with, and by activating expression of, the homeodomain gene ceh-34. Binds to the sequence motif 5'-ATAAA[T/C]A-3'. This chain is Forkhead box protein F, found in Caenorhabditis elegans.